Reading from the N-terminus, the 521-residue chain is MFRTITSRLAFSVRQAEETVKPRIAYAQRSGRRIKEKVALMQAKRKEAGETGAPEKPGKFVLKTGKGTRDYGPAQSALRNSVLQTVTETFNRYGAETIDTPVFELRDVLMGKYGEEGGKLVYDLQDQGGELLSLRYDLTVPFARYLAMNKITNITRYQIAKVYRRDQPVMSRGRYREFYQCDFDIAGQYDLMLPEAECLGIVDELLTKLEIGEFFINLNHRLILEGMFAVSGIPAKDFKTICSSVDKLDKTPWEDVEQEMINEKFLTKEQTGKLGELVRFRELNSDLNNLELLEKMSQLPDLGQNDKFKKGAEELKVLIEYLNVDGVTTVRYEPSLARGLDYYTGAIYEAVAPKALEGTAVENSEDTAGQPVGVGSVAAGGRYDGLVKMFDSKANVPCCGVSFGIERLFAIMEARQKVAIRTTQTEVYVASAQKNLVRDRKKLVKMLRSAGIKTEMALKANPKLLTQFQYAEERRIPLAIVIGEQELKDGVVKLRNVVTRDEQTIKLDQLITAVRDTLAAL.

Residues 137–139, R164, Q180, D184, R338, and 342–343 contribute to the L-histidine site; these read DLT and YY.

It belongs to the class-II aminoacyl-tRNA synthetase family.

It catalyses the reaction tRNA(His) + L-histidine + ATP = L-histidyl-tRNA(His) + AMP + diphosphate + H(+). Involved in protein synthesis. Catalyzes the specific attachment of an amino acid to its cognate tRNA in a 2 step reaction: the amino acid (AA) is first activated by ATP to form AA-AMP and then transferred to the acceptor end of the tRNA. Required for germ cell development. The sequence is that of Histidine--tRNA ligase from Caenorhabditis elegans.